The sequence spans 220 residues: Ribose-5-phosphate isomerase A (220 aa).

Substrate contacts are provided by residues 28-31 (TGST), 81-84 (DGAD), and 94-97 (KGGG). Residue E103 is the Proton acceptor of the active site. K121 is a substrate binding site.

Belongs to the ribose 5-phosphate isomerase family. As to quaternary structure, homodimer.

It carries out the reaction aldehydo-D-ribose 5-phosphate = D-ribulose 5-phosphate. The protein operates within carbohydrate degradation; pentose phosphate pathway; D-ribose 5-phosphate from D-ribulose 5-phosphate (non-oxidative stage): step 1/1. Its function is as follows. Catalyzes the reversible conversion of ribose-5-phosphate to ribulose 5-phosphate. The protein is Ribose-5-phosphate isomerase A of Coxiella burnetii (strain CbuK_Q154) (Coxiella burnetii (strain Q154)).